Consider the following 179-residue polypeptide: CASP-like protein 1F1 (179 aa).

At 1 to 16 (MENVEDKYNSPLKSQK) the chain is on the cytoplasmic side. The chain crosses the membrane as a helical span at residues 17 to 37 (LFIGAQICLRIVTIGATLAAT). Topologically, residues 38–65 (WIMVTDKQSITFGDFVMVAKYNYSSAFK) are extracellular. The N-linked (GlcNAc...) asparagine glycan is linked to N59. A helical transmembrane segment spans residues 66–86 (FFVLANVIACACSVVSLLFLC). The Cytoplasmic portion of the chain corresponds to 87–105 (ALGRYSSNPGHVFLLFLHD). The chain crosses the membrane as a helical span at residues 106 to 126 (LLMMSLVLAGCSAATAIGFLG). At 127–150 (KYGNTKSGWMPICDQFGQFCNRGT) the chain is on the extracellular side. The helical transmembrane segment at 151 to 171 (ISMMLSYLSMVCLLILTVTSA) threads the bilayer. Residues 172 to 179 (NKSRQIHV) lie on the Cytoplasmic side of the membrane.

Belongs to the Casparian strip membrane proteins (CASP) family. In terms of assembly, homodimer and heterodimers.

It is found in the cell membrane. This chain is CASP-like protein 1F1, found in Ricinus communis (Castor bean).